We begin with the raw amino-acid sequence, 316 residues long: Tyrosine recombinase XerC (316 aa).

A Core-binding (CB) domain is found at 11 to 97 (SGLRKPLDQF…SLRSFFDFLI (87 aa)). One can recognise a Tyr recombinase domain in the interval 118–298 (PLPKNLDVDE…DFQHLADVYD (181 aa)). Active-site residues include Arg-157, Lys-181, His-250, Arg-253, and His-276. The active-site O-(3'-phospho-DNA)-tyrosine intermediate is the Tyr-285.

The protein belongs to the 'phage' integrase family. XerC subfamily. Forms a cyclic heterotetrameric complex composed of two molecules of XerC and two molecules of XerD.

Its subcellular location is the cytoplasm. Site-specific tyrosine recombinase, which acts by catalyzing the cutting and rejoining of the recombining DNA molecules. The XerC-XerD complex is essential to convert dimers of the bacterial chromosome into monomers to permit their segregation at cell division. It also contributes to the segregational stability of plasmids. This Vibrio vulnificus (strain CMCP6) protein is Tyrosine recombinase XerC.